Here is a 660-residue protein sequence, read N- to C-terminus: Leucine-rich repeat transmembrane protein FLRT2 (660 aa).

The first 35 residues, 1–35, serve as a signal peptide directing secretion; sequence MGLQTTKWPSHGAFFLKSWLIISLGLYSQVSKLLA. Cystine bridges form between Cys36–Cys42 and Cys40–Cys49. The region spanning 36–63 is the LRRNT domain; the sequence is CPSVCRCDRNFVYCNERSLTSVPLGIPE. Over 36–541 the chain is Extracellular; it reads CPSVCRCDRN…TTSHSMGSPF (506 aa). LRR repeat units follow at residues 64–85, 89–109, 110–131, 134–155, 160–181, 182–202, 205–225, 231–252, 253–274, and 277–298; these read GVTV…AELH, SVHT…NLPK, NVRV…ALAQ, KLEE…DGAF, SLKL…LPVD, LQEL…AFQN, SLER…AEGT, KLKE…LPGT, HLIR…AFSN, and KLER…VFDN. Asn202 carries an N-linked (GlcNAc...) asparagine glycan. N-linked (GlcNAc...) asparagine glycosylation occurs at Asn298. The LRRCT domain occupies 310–362; that stretch reads NPWFCDCSIKWVTEWLKYIPSSLNVRGFMCQGPEQVRGMAVRELNMNLLSCPT. Cystine bridges form between Cys314/Cys339 and Cys316/Cys360. A compositionally biased stretch (low complexity) spans 373-409; the sequence is APSTASPTTQPPTLSIPNPSRSYTPPTPTTSKLPTIP. Residues 373–413 are disordered; sequence APSTASPTTQPPTLSIPNPSRSYTPPTPTTSKLPTIPDWDG. A Fibronectin type-III domain is found at 419 to 517; it reads PPISERIQLS…ICSEATTHAS (99 aa). N-linked (GlcNAc...) asparagine glycosylation is found at Asn433 and Asn521. Residues 542 to 562 form a helical membrane-spanning segment; the sequence is LLAGLIGGAVIFVLVVLLSVF. Residues 563–660 lie on the Cytoplasmic side of the membrane; that stretch reads CWHMHKKGRY…SVPDLEHCHT (98 aa).

As to quaternary structure, self-associates (via leucine-rich repeats), giving rise to homooligomers. Interacts with FGFR1. Interacts with FGFR2. Interacts (via extracellular domain) with ADGRL1/LPHN1. Interacts (via extracellular domain) with ADGRL3 (via olfactomedin-like domain). Interacts (via extracellular domain) with UNC5D (via the first Ig-like domain). Can also interact (via extracellular domain) with UNC5B, but with much lower affinity. Interacts (via extracellular domain) with FN1. Post-translationally, N-glycosylated. Proteolytic cleavage in the juxtamembrane region gives rise to a soluble ectodomain. Cleavage is probably effected by a metalloprotease. As to expression, expressed in pancreas, skeletal muscle, brain, and heart.

The protein resides in the cell membrane. It localises to the endoplasmic reticulum membrane. The protein localises to the cell junction. Its subcellular location is the focal adhesion. It is found in the secreted. The protein resides in the extracellular space. It localises to the extracellular matrix. The protein localises to the microsome membrane. Its subcellular location is the synapse. It is found in the synaptosome. In terms of biological role, functions in cell-cell adhesion, cell migration and axon guidance. Mediates cell-cell adhesion via its interactions with ADGRL3 and probably also other latrophilins that are expressed at the surface of adjacent cells. May play a role in the migration of cortical neurons during brain development via its interaction with UNC5D. Mediates axon growth cone collapse and plays a repulsive role in neuron guidance via its interaction with UNC5D, and possibly also other UNC-5 family members. Plays a role in fibroblast growth factor-mediated signaling cascades. Required for normal organization of the cardiac basement membrane during embryogenesis, and for normal embryonic epicardium and heart morphogenesis. This Homo sapiens (Human) protein is Leucine-rich repeat transmembrane protein FLRT2 (FLRT2).